Reading from the N-terminus, the 440-residue chain is tRNA(Ile)-lysidine synthase (440 aa).

13–18 (SGGADS) provides a ligand contact to ATP.

Belongs to the tRNA(Ile)-lysidine synthase family.

The protein localises to the cytoplasm. It catalyses the reaction cytidine(34) in tRNA(Ile2) + L-lysine + ATP = lysidine(34) in tRNA(Ile2) + AMP + diphosphate + H(+). Functionally, ligates lysine onto the cytidine present at position 34 of the AUA codon-specific tRNA(Ile) that contains the anticodon CAU, in an ATP-dependent manner. Cytidine is converted to lysidine, thus changing the amino acid specificity of the tRNA from methionine to isoleucine. The sequence is that of tRNA(Ile)-lysidine synthase from Solibacter usitatus (strain Ellin6076).